We begin with the raw amino-acid sequence, 373 residues long: D-alanine--D-alanine ligase (373 aa).

An ATP-grasp domain is found at 165–369 (KRLAREAGIP…FGDLVSALIA (205 aa)). 192–247 (KERLGLPVFVKPARGGSSIGISKVDSWEEFDAAIDLAFSNDNKVIVEAMIHGAEVE) contacts ATP. Mg(2+) contacts are provided by aspartate 324, glutamate 336, and asparagine 338.

It belongs to the D-alanine--D-alanine ligase family. It depends on Mg(2+) as a cofactor. The cofactor is Mn(2+).

The protein localises to the cytoplasm. It carries out the reaction 2 D-alanine + ATP = D-alanyl-D-alanine + ADP + phosphate + H(+). It functions in the pathway cell wall biogenesis; peptidoglycan biosynthesis. Cell wall formation. The sequence is that of D-alanine--D-alanine ligase from Corynebacterium jeikeium (strain K411).